We begin with the raw amino-acid sequence, 935 residues long: Peptidyl-glycine alpha-amidating monooxygenase A (935 aa).

An N-terminal signal peptide occupies residues 1 to 36 (MASLSSSFLVLFLLFQNSCYCFRSPLSVFKRYEEST). The tract at residues 1 to 390 (MASLSSSFLV…KREEEEVLDQ (390 aa)) is peptidylglycine alpha-hydroxylating monooxygenase. At 37-825 (RSLSNDCLGT…VQESSAGVSF (789 aa)) the chain is on the intragranular side. Intrachain disulfides connect cysteine 43/cysteine 182, cysteine 77/cysteine 122, cysteine 110/cysteine 127, cysteine 223/cysteine 330, and cysteine 289/cysteine 311. Residues histidine 103 and histidine 104 each coordinate Cu(2+). Positions 168, 238, 240, and 310 each coordinate Cu(2+). The tract at residues 362 to 385 (HGHHHTEAEPEKNTGLQQPKREEE) is disordered. Residues 391-712 (DVHLEEDTDW…SPSKAEHRSV (322 aa)) form a peptidyl-alpha-hydroxyglycine alpha-amidating lyase region. Arginine 426 is a binding site for a protein. NHL repeat units lie at residues 463-504 (SKVL…LGAG), 512-557 (LGRA…FSPN), and 565-609 (GEET…FHAE). Intrachain disulfides connect cysteine 526–cysteine 547 and cysteine 594–cysteine 605. A protein is bound by residues tyrosine 546 and arginine 598. A glycan (N-linked (GlcNAc...) asparagine) is linked at asparagine 658. The NHL 4 repeat unit spans residues 662 to 705 (GDILDTFIPARKNFDMPHDIAAADDGTVYVGDAHANAVWKFSPS). Basic and acidic residues predominate over residues 728-751 (FETHIRSRPKTNESVEKQTQEKQQ). Disordered stretches follow at residues 728 to 764 (FETH…TQEK) and 778 to 812 (QEKQ…TQEK). Asparagine 739 carries an N-linked (GlcNAc...) asparagine glycan. Positions 755–764 (NSAGVSTQEK) are enriched in polar residues. The chain crosses the membrane as a helical span at residues 826-846 (VLIITLLIIPIAVLIAIAIFI). Residues 847-935 (RWRKVRMYGG…PIPPAPVSSS (89 aa)) lie on the Cytoplasmic side of the membrane. Positions 896-935 (KGFDRLSTEGSDQEKDDDDGSDSEEEYSAPPIPPAPVSSS) are disordered. A compositionally biased stretch (acidic residues) spans 909–922 (EKDDDDGSDSEEEY). Over residues 925-935 (PPIPPAPVSSS) the composition is skewed to pro residues.

The protein in the C-terminal section; belongs to the peptidyl-alpha-hydroxyglycine alpha-amidating lyase family. This sequence in the N-terminal section; belongs to the copper type II ascorbate-dependent monooxygenase family. Monomer. Requires Zn(2+) as cofactor. Cu(2+) serves as cofactor.

It is found in the cytoplasmic vesicle. The protein localises to the secretory vesicle membrane. The catalysed reaction is a [peptide]-C-terminal glycine + 2 L-ascorbate + O2 = a [peptide]-C-terminal (2S)-2-hydroxyglycine + 2 monodehydro-L-ascorbate radical + H2O. The enzyme catalyses a [peptide]-C-terminal (2S)-2-hydroxyglycine = a [peptide]-C-terminal amide + glyoxylate. Its function is as follows. Bifunctional enzyme that catalyzes amidation of the C-terminus of proteins. Alpha-amidation is present at the C-terminus of many endocrine hormones and neuropeptides and is required for their activity. C-terminal amidation also takes place in response to protein fragmentation triggered by oxidative stress, promoting degradation of amidated protein fragments by the proteasome. Alpha-amidation involves two sequential reactions, both of which are catalyzed by separate catalytic domains of the enzyme. The first step, catalyzed by peptidyl alpha-hydroxylating monooxygenase (PHM) domain, is the copper-, ascorbate-, and O2- dependent stereospecific hydroxylation (with S stereochemistry) at the alpha-carbon (C-alpha) of the C-terminal glycine of the peptidylglycine substrate. The second step, catalyzed by the peptidylglycine amidoglycolate lyase (PAL) domain, is the zinc-dependent cleavage of the N-C-alpha bond, producing the alpha-amidated peptide and glyoxylate. This chain is Peptidyl-glycine alpha-amidating monooxygenase A (pam-a), found in Xenopus laevis (African clawed frog).